We begin with the raw amino-acid sequence, 126 residues long: Small ribosomal subunit protein uS13 (126 aa).

Residues 98–126 form a disordered region; the sequence is PLRGQSTKNNARTRKGKKKTVANKKKATK. Positions 108–126 are enriched in basic residues; sequence ARTRKGKKKTVANKKKATK.

The protein belongs to the universal ribosomal protein uS13 family. As to quaternary structure, part of the 30S ribosomal subunit. Forms a loose heterodimer with protein S19. Forms two bridges to the 50S subunit in the 70S ribosome.

Located at the top of the head of the 30S subunit, it contacts several helices of the 16S rRNA. In the 70S ribosome it contacts the 23S rRNA (bridge B1a) and protein L5 of the 50S subunit (bridge B1b), connecting the 2 subunits; these bridges are implicated in subunit movement. Contacts the tRNAs in the A and P-sites. In Parabacteroides distasonis (strain ATCC 8503 / DSM 20701 / CIP 104284 / JCM 5825 / NCTC 11152), this protein is Small ribosomal subunit protein uS13.